A 223-amino-acid chain; its full sequence is Probable transaldolase (223 aa).

The Schiff-base intermediate with substrate role is filled by lysine 86.

Belongs to the transaldolase family. Type 3B subfamily.

Its subcellular location is the cytoplasm. The enzyme catalyses D-sedoheptulose 7-phosphate + D-glyceraldehyde 3-phosphate = D-erythrose 4-phosphate + beta-D-fructose 6-phosphate. The protein operates within carbohydrate degradation; pentose phosphate pathway; D-glyceraldehyde 3-phosphate and beta-D-fructose 6-phosphate from D-ribose 5-phosphate and D-xylulose 5-phosphate (non-oxidative stage): step 2/3. Its function is as follows. Transaldolase is important for the balance of metabolites in the pentose-phosphate pathway. This is Probable transaldolase (tal) from Thermoplasma acidophilum (strain ATCC 25905 / DSM 1728 / JCM 9062 / NBRC 15155 / AMRC-C165).